The chain runs to 146 residues: MVDELVLLLHALLMRHRALSIENSQLMEQLRLLVCERASLLRQVRPPSCPVPFPETFNGESSRLPEFIVQTASYMLVNENRFCNDAMKVAFLISLLTGEAEEWVVPYIEMDSPILGDYRAFLDEMKQCFGWDDDEDDDDEEEEDDY.

This sequence belongs to the LDOC1 family. In terms of assembly, interacts with NOD2. Ubiquitously expressed with high levels in brain ant thyroid and low expression in placenta, liver and leukocytes. Expressed as well in six of the seven human breast cancer cell lines examined.

Its subcellular location is the nucleus. May have an important role in the development and/or progression of some cancers. The chain is Protein LDOC1 (LDOC1) from Homo sapiens (Human).